The following is a 378-amino-acid chain: Dual-specificity RNA methyltransferase RlmN 2 (378 aa).

The Proton acceptor role is filled by Glu-113. The Radical SAM core domain maps to 119–355; sequence TEDRRTLCVS…AAYIRRNRGR (237 aa). An intrachain disulfide couples Cys-126 to Cys-361. [4Fe-4S] cluster is bound by residues Cys-133, Cys-137, and Cys-140. Residues 188 to 189, Ser-220, 242 to 244, and Asn-318 each bind S-adenosyl-L-methionine; these read GE and SLN. The active-site S-methylcysteine intermediate is the Cys-361.

This sequence belongs to the radical SAM superfamily. RlmN family. [4Fe-4S] cluster is required as a cofactor.

It is found in the cytoplasm. It carries out the reaction adenosine(2503) in 23S rRNA + 2 reduced [2Fe-2S]-[ferredoxin] + 2 S-adenosyl-L-methionine = 2-methyladenosine(2503) in 23S rRNA + 5'-deoxyadenosine + L-methionine + 2 oxidized [2Fe-2S]-[ferredoxin] + S-adenosyl-L-homocysteine. It catalyses the reaction adenosine(37) in tRNA + 2 reduced [2Fe-2S]-[ferredoxin] + 2 S-adenosyl-L-methionine = 2-methyladenosine(37) in tRNA + 5'-deoxyadenosine + L-methionine + 2 oxidized [2Fe-2S]-[ferredoxin] + S-adenosyl-L-homocysteine. In terms of biological role, specifically methylates position 2 of adenine 2503 in 23S rRNA and position 2 of adenine 37 in tRNAs. m2A2503 modification seems to play a crucial role in the proofreading step occurring at the peptidyl transferase center and thus would serve to optimize ribosomal fidelity. This chain is Dual-specificity RNA methyltransferase RlmN 2, found in Myxococcus xanthus (strain DK1622).